We begin with the raw amino-acid sequence, 483 residues long: NADH-quinone oxidoreductase subunit N (483 aa).

Helical transmembrane passes span 7–27 (AILT…LGAV), 33–53 (ALAS…AFYI), 76–96 (FAKI…QDYM), 108–128 (VLII…DLIA), 161–181 (FVLG…AYGF), 196–216 (GGDM…GLAF), 235–255 (PTPI…ALFA), 272–292 (IVAF…IGQT), 297–317 (LMAY…SAGT), 323–343 (AMLI…AFIL), 369–389 (ALAI…LGFF), 402–422 (GLVW…FYYI), and 442–462 (MGLV…LGWV).

Belongs to the complex I subunit 2 family. NDH-1 is composed of 14 different subunits. Subunits NuoA, H, J, K, L, M, N constitute the membrane sector of the complex.

It is found in the cell inner membrane. It carries out the reaction a quinone + NADH + 5 H(+)(in) = a quinol + NAD(+) + 4 H(+)(out). In terms of biological role, NDH-1 shuttles electrons from NADH, via FMN and iron-sulfur (Fe-S) centers, to quinones in the respiratory chain. The immediate electron acceptor for the enzyme in this species is believed to be ubiquinone. Couples the redox reaction to proton translocation (for every two electrons transferred, four hydrogen ions are translocated across the cytoplasmic membrane), and thus conserves the redox energy in a proton gradient. The protein is NADH-quinone oxidoreductase subunit N of Jannaschia sp. (strain CCS1).